Reading from the N-terminus, the 269-residue chain is Imidazoleglycerol-phosphate dehydratase 1, chloroplastic (269 aa).

Disordered regions lie at residues 1–31 and 54–73; these read MTTA…GSGG and SGVG…VSSR. Residues 1–52 constitute a chloroplast transit peptide; sequence MTTAPFVSPSLPRLHSARASPFPKPSVGSGGGVAFPARTYGSSLRLRSAVMS. Substrate is bound by residues Glu83, 109 to 117, 135 to 139, Arg161, and Arg183; these read HMLDQLASH and HHSNE. His109, His135, His136, and Glu139 together coordinate Mn(2+). Residues His207, His231, His232, and Glu235 each coordinate Mn(2+). Residues 231–239 and 261–263 contribute to the substrate site; these read HHIIEATFK and SSK.

It belongs to the imidazoleglycerol-phosphate dehydratase family. Mn(2+) is required as a cofactor.

It is found in the plastid. The protein localises to the chloroplast. The catalysed reaction is D-erythro-1-(imidazol-4-yl)glycerol 3-phosphate = 3-(imidazol-4-yl)-2-oxopropyl phosphate + H2O. Its pathway is amino-acid biosynthesis; L-histidine biosynthesis; L-histidine from 5-phospho-alpha-D-ribose 1-diphosphate: step 6/9. The polypeptide is Imidazoleglycerol-phosphate dehydratase 1, chloroplastic (Triticum aestivum (Wheat)).